Reading from the N-terminus, the 151-residue chain is UPF0756 membrane protein GWCH70_2680 (151 aa).

The next 4 membrane-spanning stretches (helical) occupy residues 5–25 (ILFLLILFIIGFIAKNQSLMI), 53–73 (WGVTVITIAVLAPIATGEIGF), 86–106 (WIALLSGIFVALVAKGGVTLL), and 116–136 (LVFGTIIAVSLFHGVAVGPLI).

Belongs to the UPF0756 family.

It is found in the cell membrane. This Geobacillus sp. (strain WCH70) protein is UPF0756 membrane protein GWCH70_2680.